Here is a 123-residue protein sequence, read N- to C-terminus: MSINKEQILDAVATMSVMDVVELITAMEDKFGVSAAAAVAVAAGGAAEAVEEQTEFDVVLSAIGGNKVAVIKAVRGATGLGLKEAKDLVESAPNATLKEGISKDDAEALKKSLEEAGASVEIK.

The protein belongs to the bacterial ribosomal protein bL12 family. Homodimer. Part of the ribosomal stalk of the 50S ribosomal subunit. Forms a multimeric L10(L12)X complex, where L10 forms an elongated spine to which 2 to 4 L12 dimers bind in a sequential fashion. Binds GTP-bound translation factors.

In terms of biological role, forms part of the ribosomal stalk which helps the ribosome interact with GTP-bound translation factors. Is thus essential for accurate translation. The protein is Large ribosomal subunit protein bL12 of Photorhabdus laumondii subsp. laumondii (strain DSM 15139 / CIP 105565 / TT01) (Photorhabdus luminescens subsp. laumondii).